Reading from the N-terminus, the 193-residue chain is dCTP deaminase (193 aa).

Residues 110–115, Asp-128, 136–138, Tyr-171, Lys-178, and Gln-182 contribute to the dCTP site; these read RSSLAR and VLE. Glu-138 serves as the catalytic Proton donor/acceptor. A disordered region spans residues 169-193; it reads RPYNSRQDAKYKGQQGAVASRIDKD.

It belongs to the dCTP deaminase family. As to quaternary structure, homotrimer.

The catalysed reaction is dCTP + H2O + H(+) = dUTP + NH4(+). The protein operates within pyrimidine metabolism; dUMP biosynthesis; dUMP from dCTP (dUTP route): step 1/2. Functionally, catalyzes the deamination of dCTP to dUTP. The protein is dCTP deaminase of Erwinia tasmaniensis (strain DSM 17950 / CFBP 7177 / CIP 109463 / NCPPB 4357 / Et1/99).